Reading from the N-terminus, the 198-residue chain is FMN-dependent NADH:quinone oxidoreductase (198 aa).

Residues S10, 16 to 18 (SQS), 94 to 97 (MYNF), and 138 to 141 (TRGG) contribute to the FMN site.

It belongs to the azoreductase type 1 family. As to quaternary structure, homodimer. The cofactor is FMN.

It catalyses the reaction 2 a quinone + NADH + H(+) = 2 a 1,4-benzosemiquinone + NAD(+). It carries out the reaction N,N-dimethyl-1,4-phenylenediamine + anthranilate + 2 NAD(+) = 2-(4-dimethylaminophenyl)diazenylbenzoate + 2 NADH + 2 H(+). Functionally, quinone reductase that provides resistance to thiol-specific stress caused by electrophilic quinones. Also exhibits azoreductase activity. Catalyzes the reductive cleavage of the azo bond in aromatic azo compounds to the corresponding amines. The sequence is that of FMN-dependent NADH:quinone oxidoreductase from Shewanella sp. (strain ANA-3).